Reading from the N-terminus, the 763-residue chain is DNA-binding protein SATB1 (763 aa).

Residues 1–15 (MDHLNEATQGKEHSE) show a composition bias toward basic and acidic residues. The tract at residues 1 to 54 (MDHLNEATQGKEHSEMSNNVSDPKGPPAKIARLEQNGSPLGRGRLGSTGAKMQG) is disordered. Positions 20 to 40 (VSDPKGPPAKIARLEQNGSPL) match the Nuclear localization signal motif. A Glycyl lysine isopeptide (Lys-Gly) (interchain with G-Cter in SUMO2) cross-link involves residue K51. The region spanning 71 to 172 (GTMLPVFCVV…VVTLKIQLHS (102 aa)) is the CMP domain. An N6-acetyllysine modification is found at K136. Residues 139–143 (PVPLS) carry the Protein interaction motif. The 74-residue stretch at 175–248 (KLEDLPPEQW…WYKHFKKTKD (74 aa)) folds into the CUTL domain. S185 carries the phosphoserine modification. Residues 224-278 (YYANVSAAKCQEFGRWYKHFKKTKDMMVEMDSLSELSQQGANHVNFGQQPVPGNT) are nuclear matrix targeting sequence (NMTS). A compositionally biased stretch (polar residues) spans 266–296 (HVNFGQQPVPGNTAEQPPSPAQLSHGSQPSV). Positions 266 to 307 (HVNFGQQPVPGNTAEQPPSPAQLSHGSQPSVRTPLPNLHPGL) are disordered. 2 DNA-binding regions (CUT) span residues 361-448 (LEQQ…QDER) and 484-571 (NGKP…EQES). Residues Q390, 400–410 (RTQGLLSEILR), and N425 each bind DNA. A compositionally biased stretch (low complexity) spans 591-607 (QIQQQQQQQQQQQQQQQ). The disordered stretch occupies residues 591–649 (QIQQQQQQQQQQQQQQQAPPPPQPQQQPQTGPRLPPRQPTVASPAESDEENRQKTRPRT). S637 bears the Phosphoserine mark. Positions 645–704 (TRPRTKISVEALGILQSFIQDVGLYPDEEAIQTLSAQLDLPKYTIIKFFQNQRYYLKHHG) form a DNA-binding region, homeobox. K744 participates in a covalent cross-link: Glycyl lysine isopeptide (Lys-Gly) (interchain with G-Cter in SUMO).

It belongs to the CUT homeobox family. Interacts with CUX1 (via DNA-binding domains); the interaction inhibits the attachment of both proteins to DNA. Homodimer. Part of the nuclear protein complex gamma-globin promoter and enhancer binding factor (gamma-PE) composed at least of SATB1 and HOXB2. Interaction with CtBP1 when not acetylated stabilizes attachment to DNA and promotes transcription repression. Interacts with PCAF. Interacts with sumoylated PML and HDAC1 via the CMP domain. Interacts also with DYNLT3 and POLR2J2. Binds to EP300. In terms of assembly, (Microbial infection) Interacts (via the CMP domain) with HIV-1 Tat. Post-translationally, sumoylated. Sumoylation promotes cleavage by caspases. Phosphorylated by PKC. Acetylated by PCAF. Phosphorylated form interacts with HDAC1, but unphosphorylated form interacts with PCAF. DNA binding properties are activated by phosphorylation and inactivated by acetylation. In opposition, gene expression is down-regulated by phosphorylation but up-regulated by acetylation. In terms of processing, cleaved at Asp-254 by caspase-3 and caspase-6 during T-cell apoptosis in thymus and during B-cell stimulation. The cleaved forms cannot dimerize and lose transcription regulation function because of impaired DNA and chromatin association. In terms of tissue distribution, expressed predominantly in thymus.

Its subcellular location is the nucleus matrix. The protein localises to the nucleus. It localises to the PML body. Crucial silencing factor contributing to the initiation of X inactivation mediated by Xist RNA that occurs during embryogenesis and in lymphoma. Binds to DNA at special AT-rich sequences, the consensus SATB1-binding sequence (CSBS), at nuclear matrix- or scaffold-associated regions. Thought to recognize the sugar-phosphate structure of double-stranded DNA. Transcriptional repressor controlling nuclear and viral gene expression in a phosphorylated and acetylated status-dependent manner, by binding to matrix attachment regions (MARs) of DNA and inducing a local chromatin-loop remodeling. Acts as a docking site for several chromatin remodeling enzymes (e.g. PML at the MHC-I locus) and also by recruiting corepressors (HDACs) or coactivators (HATs) directly to promoters and enhancers. Modulates genes that are essential in the maturation of the immune T-cell CD8SP from thymocytes. Required for the switching of fetal globin species, and beta- and gamma-globin genes regulation during erythroid differentiation. Plays a role in chromatin organization and nuclear architecture during apoptosis. Interacts with the unique region (UR) of cytomegalovirus (CMV). Alu-like motifs and SATB1-binding sites provide a unique chromatin context which seems preferentially targeted by the HIV-1 integration machinery. Moreover, HIV-1 Tat may overcome SATB1-mediated repression of IL2 and IL2RA (interleukin) in T-cells by binding to the same domain than HDAC1. Delineates specific epigenetic modifications at target gene loci, directly up-regulating metastasis-associated genes while down-regulating tumor-suppressor genes. Reprograms chromatin organization and the transcription profiles of breast tumors to promote growth and metastasis. Promotes neuronal differentiation of neural stem/progenitor cells in the adult subventricular zone, possibly by positively regulating the expression of NEUROD1. The polypeptide is DNA-binding protein SATB1 (Homo sapiens (Human)).